The primary structure comprises 326 residues: MPLDTKQQKWLPLGLNPQACVQDKATEYFRPGIPFPELGKVYAAEHQFRYLQPPFQALLSRYDQQSCGKQVSCLNGRSSNGAAPEGALKSSRKRFIVFDQSGEQTRLLQCGFPLRFPSSMDAERGNILGALHPEKGFSKDHAIQEKILQHEDHENGEEDSEMHEDTEEINALLYSDDDDNDDWESDDEVMSTGHSPFTVEQQACNITTEELDETESTVDGPLLKRQKLLDHSYRDSSPSLVGTTKVKGLSDENLPESNISSKQETGSGLSDEQSRKDKIHTALRILESVVPGAKGKEALLLLDEAIDYLKLLKQSLNSSKGLNNHW.

Acidic residues predominate over residues 175–189 (SDDDDNDDWESDDEV). 2 disordered regions span residues 175–194 (SDDDDNDDWESDDEVMSTGH) and 234–275 (RDSS…EQSR). Over residues 255–271 (PESNISSKQETGSGLSD) the composition is skewed to polar residues. One can recognise a bHLH domain in the interval 263–312 (QETGSGLSDEQSRKDKIHTALRILESVVPGAKGKEALLLLDEAIDYLKLL).

Homodimer.

The protein resides in the nucleus. This Arabidopsis thaliana (Mouse-ear cress) protein is Transcription factor bHLH143 (BHLH143).